The chain runs to 115 residues: Chaperone protein PrsD (115 aa).

The protein belongs to the periplasmic pilus chaperone family.

The protein localises to the periplasm. Functionally, mediates assembly of pili by forming soluble multimeric complexes with pili subunits as an intermediate step in the assembly process. In Escherichia coli, this protein is Chaperone protein PrsD (prsD).